The following is a 438-amino-acid chain: Vasoactive intestinal polypeptide receptor 2 (438 aa).

A signal peptide spans 1–23; that stretch reads MRTLLPPALLTCWLLAPVNSIHP. Over 24–124 the chain is Extracellular; that stretch reads ECRFHLEIQE…EDESKITFYI (101 aa). Intrachain disulfides connect C38/C61, C52/C93, and C75/C109. N-linked (GlcNAc...) asparagine glycosylation is found at N58, N88, and N92. Residues 125 to 150 form a helical membrane-spanning segment; the sequence is LVKAIYTLGYSVSLMSLATGSIILCL. At 151 to 158 the chain is on the cytoplasmic side; that stretch reads FRKLHCTR. The helical transmembrane segment at 159–180 threads the bilayer; the sequence is NYIHLNLFLSFILRAISVLVKD. Topologically, residues 181–203 are extracellular; the sequence is DVLYSSSGTLHCPDQPSSWVGCK. C202 and C271 are oxidised to a cystine. Residues 204–228 traverse the membrane as a helical segment; it reads LSLVFLQYCIMANFFWLLVEGLYLH. Over 229-239 the chain is Cytoplasmic; sequence TLLVAMLPPRR. Residues 240–261 form a helical membrane-spanning segment; the sequence is CFLAYLLIGWGLPTVCIGAWTA. Topologically, residues 262–280 are extracellular; that stretch reads ARLYLEDTGCWDTNDHSVP. Residues 281–304 traverse the membrane as a helical segment; it reads WWVIRIPILISIIVNFVLFISIIR. Residues 305 to 325 lie on the Cytoplasmic side of the membrane; the sequence is ILLQKLTSPDVGGNDQSQYKR. The helical transmembrane segment at 326 to 346 threads the bilayer; the sequence is LAKSTLLLIPLFGVHYMVFAV. The Extracellular portion of the chain corresponds to 347–354; sequence FPISISSK. The helical transmembrane segment at 355–378 threads the bilayer; that stretch reads YQILFELCLGSFQGLVVAVLYCFL. Topologically, residues 379 to 438 are cytoplasmic; that stretch reads NSEVQCELKRKWRSRCPTPSASRDYRVCGSSFSRNGSEGALQFHRGSRAQSFLQTETSVI.

It belongs to the G-protein coupled receptor 2 family. Interacts with ADCYAP1/PACAP (via N-terminal extracellular domain); activated by PACAP27 and CAPAC38 neuropeptides. Interacts with VIP; the interaction results in VIPR1 activation. As to expression, expressed in CD4+ T-cells, but not in CD8+ T-cells. Expressed in the T-cell lines Jurkat, Peer, MOLT-4, HSB, YT and SUP-T1, but not in the T-cell lines HARRIS and HuT 78.

It localises to the cell membrane. Functionally, g protein-coupled receptor activated by the neuropeptides vasoactive intestinal peptide (VIP) and pituitary adenylate cyclase-activating polypeptide (ADCYAP1/PACAP). Binds VIP and both PACAP27 and PACAP38 bioactive peptides with the following order of potency PACAP38 = VIP &gt; PACAP27. Ligand binding causes a conformation change that triggers signaling via guanine nucleotide-binding proteins (G proteins) and modulates the activity of downstream effectors. Activates cAMP-dependent pathway. May be coupled to phospholipase C. In Homo sapiens (Human), this protein is Vasoactive intestinal polypeptide receptor 2.